Consider the following 468-residue polypeptide: Heparan-sulfate 6-O-sulfotransferase 2 (468 aa).

The Cytoplasmic portion of the chain corresponds to 1-9 (MDGKSNYSR). A helical; Signal-anchor for type II membrane protein transmembrane segment spans residues 10–30 (LLIALLMILFFGGIVLQYICS). The Lumenal portion of the chain corresponds to 31–468 (TSDWQLLHLA…DYLENVEQWR (438 aa)). Asparagine 79 carries an N-linked (GlcNAc...) asparagine glycan. A 3'-phosphoadenylyl sulfate-binding site is contributed by 103–111 (HIQKTGGTT). Substrate-binding positions include 133-134 (KK), arginine 150, tryptophan 155, and histidine 160. The active-site Proton acceptor is the histidine 160. Positions 197 and 205 each coordinate 3'-phosphoadenylyl sulfate. Residues histidine 209 and tryptophan 216 each contribute to the substrate site. N-linked (GlcNAc...) asparagine glycosylation occurs at asparagine 276. Residue 329 to 331 (TQL) participates in 3'-phosphoadenylyl sulfate binding. N-linked (GlcNAc...) asparagine glycosylation occurs at asparagine 332. A 3'-phosphoadenylyl sulfate-binding site is contributed by 335 to 336 (RA). Residues 409-447 (FKPTKEPPMTEQSPAFAEEKQADAERTLESETEGQVEEN) form a disordered region. Over residues 425-437 (AEEKQADAERTLE) the composition is skewed to basic and acidic residues. Positions 438–447 (SETEGQVEEN) are enriched in acidic residues.

The protein belongs to the sulfotransferase 6 family. In terms of tissue distribution, expressed ubiquitously during gastrulation. During early somitogenesis, strong expression in head and presumptive brain. During mid-somitogenesis, strong expression in eye, hindbrain and somitic boundaries and weak expression in tail bud. During late somitogenesis, strong expression in eye, hindbrain, branchial arch primordia, spinal cord and ventral medial somites. At 24 hours post-fertilization (hpf), strong expression throughout the head, with expression receeding from the trunk spinal cord, ventral medial somites and somitic boundaries; expressed in cells surrounding vascular structures of the dorsal aorta and caudal vein in the tail. At 36 hpf, expressed in lens, optic stalk, hindbrain and pectoral fin. At 48 hpf, expressed in eye, brain, otic vesicle and branchial arches.

The protein resides in the membrane. The enzyme catalyses alpha-D-glucosaminyl-[heparan sulfate](n) + 3'-phosphoadenylyl sulfate = 6-sulfo-alpha-D-glucosaminyl-[heparan sulfate](n) + adenosine 3',5'-bisphosphate + H(+). Functionally, 6-O-sulfation enzyme which catalyzes the transfer of sulfate from 3'-phosphoadenosine 5'-phosphosulfate (PAPS) to position 6 of the N-sulfoglucosamine residue (GlcNS) of heparan sulfate. Required for muscle development and angiogenesis. In Danio rerio (Zebrafish), this protein is Heparan-sulfate 6-O-sulfotransferase 2 (hs6st2).